The primary structure comprises 238 residues: DNA damage-regulated autophagy modulator protein 1 (238 aa).

Transmembrane regions (helical) follow at residues 9-29, 53-73, 91-111, 116-136, 161-181, and 200-220; these read AFVPFLLVTWSSAAFIISYVV, SGIFGFMINFSAFLGAATMYT, VFNLVSLALGLVGCIGMGIVA, LAVPVVHDGGALLAFVCGVVY, MAISAVSCAAVVPMIACASLI, and VSAICEWTVAFGFIFYFLTFI.

The protein belongs to the DRAM/TMEM150 family.

It localises to the lysosome membrane. Functionally, lysosomal modulator of autophagy that plays a central role in p53/TP53-mediated apoptosis. Not involved in p73/TP73-mediated autophagy. The protein is DNA damage-regulated autophagy modulator protein 1 (Dram1) of Mus musculus (Mouse).